We begin with the raw amino-acid sequence, 429 residues long: Phosphomethylpyrimidine synthase (429 aa).

Residues asparagine 66, methionine 95, tyrosine 124, histidine 163, 185–187, 226–229, and glutamate 265 contribute to the substrate site; these read SRG and DGLR. Residue histidine 269 participates in Zn(2+) binding. Tyrosine 292 provides a ligand contact to substrate. Position 333 (histidine 333) interacts with Zn(2+). [4Fe-4S] cluster contacts are provided by cysteine 407, cysteine 410, and cysteine 414.

The protein belongs to the ThiC family. Requires [4Fe-4S] cluster as cofactor.

The enzyme catalyses 5-amino-1-(5-phospho-beta-D-ribosyl)imidazole + S-adenosyl-L-methionine = 4-amino-2-methyl-5-(phosphooxymethyl)pyrimidine + CO + 5'-deoxyadenosine + formate + L-methionine + 3 H(+). Its pathway is cofactor biosynthesis; thiamine diphosphate biosynthesis. In terms of biological role, catalyzes the synthesis of the hydroxymethylpyrimidine phosphate (HMP-P) moiety of thiamine from aminoimidazole ribotide (AIR) in a radical S-adenosyl-L-methionine (SAM)-dependent reaction. In Pyrococcus abyssi (strain GE5 / Orsay), this protein is Phosphomethylpyrimidine synthase.